The following is a 395-amino-acid chain: MAVIIPRSDPPSRIHPEPPQTLEIDHFDHLPDSILLLVFNKIGDVKALGRCCVVSRRFHSLVPQVDNVVVRVDCVISDDDSSSLSSIKSRSGSSAGSFSAIFRLVVGGIVKPLQALGQFLGTKRSSSSCGGSGSSSSSLSISGDDDGGEIEQGGVTHHSPTQVLKNFDEIRYLRIELPSGELGIDDGVLLKWRAEFGSTLDNCVILGASSVIPPNPMRVSQACDTTTVVEAPGSGSDDNGSIPESFYTNGGLKLRVVWTISSLIAASARHYLLQPIIAEHKTLDSLVLTDSDGQGVLCMNRDQLEELRVKPLAASSASKRTLVPALNMRLWYAPTLELPDGTVLKGATLVAIRPSESKKEVSDISWVSSAFEEPYETAAKMLVKRRTYCLEMNSF.

The region spanning 24–72 (IDHFDHLPDSILLLVFNKIGDVKALGRCCVVSRRFHSLVPQVDNVVVRV) is the F-box domain. The segment at 122–158 (TKRSSSSCGGSGSSSSSLSISGDDDGGEIEQGGVTHH) is disordered. The segment covering 125–142 (SSSSCGGSGSSSSSLSIS) has biased composition (low complexity).

The protein is F-box protein At5g46170 of Arabidopsis thaliana (Mouse-ear cress).